The chain runs to 513 residues: tRNA-2-methylthio-N(6)-dimethylallyladenosine synthase (513 aa).

Positions 67–185 constitute an MTTase N-terminal domain; the sequence is KTFLIKTYGC…LPEILEEAYL (119 aa). The [4Fe-4S] cluster site is built by Cys-76, Cys-112, Cys-146, Cys-222, Cys-226, and Cys-229. A Radical SAM core domain is found at 208 to 438; the sequence is REGNIKAWVN…NKKVACYSER (231 aa). Positions 441–504 constitute a TRAM domain; the sequence is QQYEGQTVQV…QFSLNGTFIS (64 aa).

It belongs to the methylthiotransferase family. MiaB subfamily. As to quaternary structure, monomer. The cofactor is [4Fe-4S] cluster.

Its subcellular location is the cytoplasm. It catalyses the reaction N(6)-dimethylallyladenosine(37) in tRNA + (sulfur carrier)-SH + AH2 + 2 S-adenosyl-L-methionine = 2-methylsulfanyl-N(6)-dimethylallyladenosine(37) in tRNA + (sulfur carrier)-H + 5'-deoxyadenosine + L-methionine + A + S-adenosyl-L-homocysteine + 2 H(+). Catalyzes the methylthiolation of N6-(dimethylallyl)adenosine (i(6)A), leading to the formation of 2-methylthio-N6-(dimethylallyl)adenosine (ms(2)i(6)A) at position 37 in tRNAs that read codons beginning with uridine. The chain is tRNA-2-methylthio-N(6)-dimethylallyladenosine synthase from Staphylococcus saprophyticus subsp. saprophyticus (strain ATCC 15305 / DSM 20229 / NCIMB 8711 / NCTC 7292 / S-41).